A 502-amino-acid polypeptide reads, in one-letter code: Acetylcholine receptor subunit alpha-type unc-63 (502 aa).

The signal sequence occupies residues 1-23 (MGPNDHGFAYILIFLLLSPPTHA). Topologically, residues 24 to 263 (NRDANRLFED…HLRRKTLFYT (240 aa)) are extracellular. N-linked (GlcNAc...) asparagine glycosylation is present at asparagine 136. Cysteines 151 and 165 form a disulfide. 3 helical membrane-spanning segments follow: residues 264–284 (VNLI…FYLP), 293–313 (LCIS…EIIP), and 326–346 (LLFT…TLNV). Over 347–470 (HYRSPTTHTM…WKYISVVMDR (124 aa)) the chain is Cytoplasmic. The chain crosses the membrane as a helical span at residues 471-491 (IFLITFTFACAFGTVVIIARA).

The protein belongs to the ligand-gated ion channel (TC 1.A.9) family. Acetylcholine receptor (TC 1.A.9.1) subfamily. In terms of assembly, component of nicotinic acetylcholine receptor. In muscles, composed of 2 non-alpha subunits lev-1 and unc-29, and 3 alpha subunits unc-38, unc-63 and lev-8. In cholinergic motoneurons, composed of 2 non-alpha subunits acr-2 and acr-3, and 3 alpha subunits unc-38, unc-63 and acr-12. Interacts with lev-10. As to expression, expressed in body wall muscles, in vulval muscles and in neurons.

Its subcellular location is the postsynaptic cell membrane. It is found in the cell membrane. Alpha subunit of nicotinic acetylcholine receptor (nAChR). Probably acts in cholinergic motoneurons to regulate presynaptic neurotransmitter release, thereby ensuring normal level of excitation of cholinergic motoneurons during locomotion. Involved in nAChR sensitivity to nicotine and levamisole. The protein is Acetylcholine receptor subunit alpha-type unc-63 (unc-63) of Caenorhabditis elegans.